The chain runs to 428 residues: 3-phosphoshikimate 1-carboxyvinyltransferase (428 aa).

Residues K22, S23, and R27 each coordinate 3-phosphoshikimate. K22 is a binding site for phosphoenolpyruvate. Phosphoenolpyruvate contacts are provided by G96 and R124. The 3-phosphoshikimate site is built by S170, S171, Q172, S198, D314, N337, and K341. Q172 contacts phosphoenolpyruvate. The Proton acceptor role is filled by D314. Residues R345, R387, and K412 each contribute to the phosphoenolpyruvate site.

The protein belongs to the EPSP synthase family. As to quaternary structure, monomer.

The protein localises to the cytoplasm. It catalyses the reaction 3-phosphoshikimate + phosphoenolpyruvate = 5-O-(1-carboxyvinyl)-3-phosphoshikimate + phosphate. The protein operates within metabolic intermediate biosynthesis; chorismate biosynthesis; chorismate from D-erythrose 4-phosphate and phosphoenolpyruvate: step 6/7. Catalyzes the transfer of the enolpyruvyl moiety of phosphoenolpyruvate (PEP) to the 5-hydroxyl of shikimate-3-phosphate (S3P) to produce enolpyruvyl shikimate-3-phosphate and inorganic phosphate. This Shewanella amazonensis (strain ATCC BAA-1098 / SB2B) protein is 3-phosphoshikimate 1-carboxyvinyltransferase.